A 761-amino-acid polypeptide reads, in one-letter code: Zinc finger protein 711 (761 aa).

Glycyl lysine isopeptide (Lys-Gly) (interchain with G-Cter in SUMO2) cross-links involve residues Lys224, Lys235, and Lys296. C2H2-type zinc fingers lie at residues 383–408 (YPCH…HPDH), 414–436 (YQCT…LESH), 476–499 (HKCK…LAVH), 505–527 (HVCV…MRTH), and 533–556 (YQCQ…KSKH). Positions 515–761 (RHPSELKKHM…IMRHHKEALM (247 aa)) are required for transcriptional activation. The C2H2-type 6; atypical zinc-finger motif lies at 562-584 (YKCEHCPQAFGDERELQRHLDLF). Positions 564, 567, and 580 each coordinate Zn(2+). C2H2-type zinc fingers lie at residues 590–613 (HQCP…ISVH), 619–641 (HKCE…SDIH), 647–670 (HQCR…LSVH), 676–698 (LKCK…MKTH), 704–727 (YQCE…ISIH), and 733–755 (HRCE…IMRH).

Belongs to the krueppel C2H2-type zinc-finger protein family. As to quaternary structure, interacts with PHF8. In terms of tissue distribution, expressed in neural tissues.

It localises to the nucleus. In terms of biological role, transcription regulator required for brain development. Probably acts as a transcription factor that binds to the promoter of target genes and recruits PHF8 histone demethylase, leading to activated expression of genes involved in neuron development, such as KDM5C. May compete with transcription factor ARX for activation of expression of KDM5C. This chain is Zinc finger protein 711 (ZNF711), found in Homo sapiens (Human).